We begin with the raw amino-acid sequence, 197 residues long: Molybdenum cofactor guanylyltransferase (197 aa).

GTP-binding positions include 10–12, Lys23, Asp69, and Asp99; that span reads LAG. Asp99 lines the Mg(2+) pocket.

Belongs to the MobA family. Monomer. Mg(2+) serves as cofactor.

It is found in the cytoplasm. It catalyses the reaction Mo-molybdopterin + GTP + H(+) = Mo-molybdopterin guanine dinucleotide + diphosphate. In terms of biological role, transfers a GMP moiety from GTP to Mo-molybdopterin (Mo-MPT) cofactor (Moco or molybdenum cofactor) to form Mo-molybdopterin guanine dinucleotide (Mo-MGD) cofactor. The sequence is that of Molybdenum cofactor guanylyltransferase from Serratia proteamaculans (strain 568).